The sequence spans 62 residues: Protein CYSTEINE-RICH TRANSMEMBRANE MODULE 2 (62 aa).

2 consecutive transmembrane segments (helical) span residues Val-23–Asp-39 and Val-33–Ile-53.

Belongs to the CYSTM1 family. Heterodimers. Binds weakly to CYSTM7 and WIH1/CYSTM13. In terms of tissue distribution, mostly expressed in stems, siliques, leaves and flowers and, to a lower extent, in roots.

It is found in the cell membrane. Its subcellular location is the nucleus. The protein localises to the secreted. The protein resides in the cell wall. Involved in resistance to abiotic stress. Its function is as follows. Confers resistance to heavy metal ions (e.g. cadmium (CdCl(2)) and copper (CuCl(2))) by chelating them at the plasma membrane of root cells, thus stopping their entry and reducing their accumulation. In Arabidopsis thaliana (Mouse-ear cress), this protein is Protein CYSTEINE-RICH TRANSMEMBRANE MODULE 2.